The chain runs to 208 residues: Peroxiredoxin (208 aa).

The Thioredoxin domain maps to 2–156 (PLLGDDFPQL…IVRAVKALQT (155 aa)). Residue Cys-44 is the Cysteine sulfenic acid (-SOH) intermediate of the active site. Arg-119 lines the substrate pocket.

The protein belongs to the peroxiredoxin family. Prx6 subfamily. Homodecamer. Pentamer of dimers that assemble into a ring structure.

The protein resides in the cytoplasm. It catalyses the reaction a hydroperoxide + [thioredoxin]-dithiol = an alcohol + [thioredoxin]-disulfide + H2O. Functionally, thiol-specific peroxidase that catalyzes the reduction of hydrogen peroxide and organic hydroperoxides to water and alcohols, respectively. Plays a role in cell protection against oxidative stress by detoxifying peroxides. The chain is Peroxiredoxin from Treponema denticola (strain ATCC 35405 / DSM 14222 / CIP 103919 / JCM 8153 / KCTC 15104).